A 349-amino-acid polypeptide reads, in one-letter code: MFSKRIKLLKAYKTETTPCHIKLSSNENPFDLEESVKLELLEVIKNIEFNRYPDPHATKLRQTLSKLYEVEPENIMVCNGSDEAIQYLMLGIGELDEGVLIPRPTFPMYEVIANALGKPIYDVDLDENFQMNKQTLQKALEKKPSIAFISNPNNPTGNLFRDEDIALIRKHTFTVVDEAYYDFCGKTYIKDAIKDDNMAVMRTLSKIGLASLRVGALIGTKEFIREISKLKMPFNVSYTSQAMADYIISNHIDNIKNQIKVLIDERHRLKEALSDIKGIKVYDSCANFFLIKVNDADFIHKSLIQKGILTRNISYLPNLENHIRISIGKKEENDALINALKEIAQQVYL.

Position 206 is an N6-(pyridoxal phosphate)lysine (lysine 206).

It belongs to the class-II pyridoxal-phosphate-dependent aminotransferase family. Histidinol-phosphate aminotransferase subfamily. As to quaternary structure, homodimer. Pyridoxal 5'-phosphate serves as cofactor.

It catalyses the reaction L-histidinol phosphate + 2-oxoglutarate = 3-(imidazol-4-yl)-2-oxopropyl phosphate + L-glutamate. Its pathway is amino-acid biosynthesis; L-histidine biosynthesis; L-histidine from 5-phospho-alpha-D-ribose 1-diphosphate: step 7/9. The sequence is that of Histidinol-phosphate aminotransferase from Hydrogenobaculum sp. (strain Y04AAS1).